Here is an 83-residue protein sequence, read N- to C-terminus: Large ribosomal subunit protein eL43 (83 aa).

Zn(2+)-binding residues include C38, C41, C56, and C59. The segment at 38 to 59 (CPVCGRKAVKRISTGIWQCQKC) adopts a C4-type zinc-finger fold.

It belongs to the eukaryotic ribosomal protein eL43 family. Putative zinc-binding subfamily. As to quaternary structure, part of the 50S ribosomal subunit. Zn(2+) serves as cofactor.

Its function is as follows. Binds to the 23S rRNA. The chain is Large ribosomal subunit protein eL43 from Pyrococcus furiosus (strain ATCC 43587 / DSM 3638 / JCM 8422 / Vc1).